We begin with the raw amino-acid sequence, 504 residues long: SPbeta prophage-derived uncharacterized protein YorI (504 aa).

The chain is SPbeta prophage-derived uncharacterized protein YorI (yorI) from Bacillus subtilis (strain 168).